The following is a 230-amino-acid chain: MTSDDRIKLEPIWKEALRDEFEQPYMAQLREFLRQEHAAGKEIYPPGPLIFNALNSTPLNNVKVVILGQDPYHGPNQAHGLCFSVQPGVPTPPSLVNIYKELKRDLNIDIPNHGCLQSWADQGVLLLNTTLTVERANAASHAGKGWQHFTDRIIQVVSEHQPHLVFLLWGAHAQSKQKLVDATKHLVLTSVHPSPLSAYKGFLGNGHFGRANKYLEQNGIEPIDWRLPVL.

The Proton acceptor role is filled by D70.

Belongs to the uracil-DNA glycosylase (UDG) superfamily. UNG family.

It localises to the cytoplasm. The enzyme catalyses Hydrolyzes single-stranded DNA or mismatched double-stranded DNA and polynucleotides, releasing free uracil.. Excises uracil residues from the DNA which can arise as a result of misincorporation of dUMP residues by DNA polymerase or due to deamination of cytosine. This chain is Uracil-DNA glycosylase, found in Pseudomonas savastanoi pv. phaseolicola (strain 1448A / Race 6) (Pseudomonas syringae pv. phaseolicola (strain 1448A / Race 6)).